Consider the following 1216-residue polypeptide: ATP-dependent helicase/nuclease subunit A (1216 aa).

In terms of domain architecture, UvrD-like helicase ATP-binding spans 26 to 488 (QKKTAEQIEA…IILKENFRSS (463 aa)). An ATP-binding site is contributed by 47-54 (ASAGSGKT). In terms of domain architecture, UvrD-like helicase C-terminal spans 515 to 802 (KHQLVFANTK…ELMTIHKSKG (288 aa)).

It belongs to the helicase family. AddA subfamily. In terms of assembly, heterodimer of AddA and AddB/RexB. Requires Mg(2+) as cofactor.

It carries out the reaction Couples ATP hydrolysis with the unwinding of duplex DNA by translocating in the 3'-5' direction.. The enzyme catalyses ATP + H2O = ADP + phosphate + H(+). Functionally, the heterodimer acts as both an ATP-dependent DNA helicase and an ATP-dependent, dual-direction single-stranded exonuclease. Recognizes the chi site generating a DNA molecule suitable for the initiation of homologous recombination. The AddA nuclease domain is required for chi fragment generation; this subunit has the helicase and 3' -&gt; 5' nuclease activities. The sequence is that of ATP-dependent helicase/nuclease subunit A from Streptococcus pneumoniae serotype 2 (strain D39 / NCTC 7466).